The following is a 520-amino-acid chain: GMP synthase [glutamine-hydrolyzing] (520 aa).

The Glutamine amidotransferase type-1 domain maps to 9–202 (SVLIVDFGSQ…IHNIAGIKGD (194 aa)). Catalysis depends on Cys-86, which acts as the Nucleophile. Active-site residues include His-176 and Glu-178. The GMPS ATP-PPase domain maps to 203 to 395 (WSMSAYRQKA…LGLPDSFIGR (193 aa)). An ATP-binding site is contributed by 230-236 (SGGVDSS).

Homodimer.

The catalysed reaction is XMP + L-glutamine + ATP + H2O = GMP + L-glutamate + AMP + diphosphate + 2 H(+). It functions in the pathway purine metabolism; GMP biosynthesis; GMP from XMP (L-Gln route): step 1/1. Its function is as follows. Catalyzes the synthesis of GMP from XMP. This is GMP synthase [glutamine-hydrolyzing] from Rhizobium etli (strain CIAT 652).